Here is a 517-residue protein sequence, read N- to C-terminus: V-type proton ATPase subunit B (517 aa).

Position 4 is a phosphoserine (Ser4). A Glycyl lysine isopeptide (Lys-Gly) (interchain with G-Cter in ubiquitin) cross-link involves residue Lys14. Ser137 is modified (phosphoserine). Arg381 is a binding site for ATP. Positions 487-517 are disordered; that stretch reads RARDDADEDEEDPDTRSSGKKKDASQEESLI. Basic and acidic residues predominate over residues 500–511; that stretch reads DTRSSGKKKDAS. Phosphoserine occurs at positions 503 and 504. Residue Lys508 forms a Glycyl lysine isopeptide (Lys-Gly) (interchain with G-Cter in ubiquitin) linkage. Ser511 is subject to Phosphoserine; by ATM or ATR. Ser515 carries the phosphoserine modification.

This sequence belongs to the ATPase alpha/beta chains family. V-ATPase is a heteromultimeric enzyme composed of a peripheral catalytic V1 complex (components A to H) attached to an integral membrane V0 proton pore complex (components: a, c, c', c'', d, e, f and VOA1). Interacts with RAV1 and RAV2 components of the RAVE complex, which are essential for the stability and assembly of V-ATPase.

It localises to the vacuole membrane. In terms of biological role, non-catalytic subunit of the V1 complex of vacuolar(H+)-ATPase (V-ATPase), a multisubunit enzyme composed of a peripheral complex (V1) that hydrolyzes ATP and a membrane integral complex (V0) that translocates protons. V-ATPase is responsible for acidifying and maintaining the pH of intracellular compartments. In Saccharomyces cerevisiae (strain ATCC 204508 / S288c) (Baker's yeast), this protein is V-type proton ATPase subunit B (VMA2).